Here is a 603-residue protein sequence, read N- to C-terminus: Glutamyl-tRNA(Gln) amidotransferase subunit E (603 aa).

This sequence belongs to the GatB/GatE family. GatE subfamily. As to quaternary structure, heterodimer of GatD and GatE.

The catalysed reaction is L-glutamyl-tRNA(Gln) + L-glutamine + ATP + H2O = L-glutaminyl-tRNA(Gln) + L-glutamate + ADP + phosphate + H(+). Its function is as follows. Allows the formation of correctly charged Gln-tRNA(Gln) through the transamidation of misacylated Glu-tRNA(Gln) in organisms which lack glutaminyl-tRNA synthetase. The reaction takes place in the presence of glutamine and ATP through an activated gamma-phospho-Glu-tRNA(Gln). The GatDE system is specific for glutamate and does not act on aspartate. This Thermoplasma acidophilum (strain ATCC 25905 / DSM 1728 / JCM 9062 / NBRC 15155 / AMRC-C165) protein is Glutamyl-tRNA(Gln) amidotransferase subunit E.